The chain runs to 185 residues: Elongation factor P (185 aa).

It belongs to the elongation factor P family.

Its subcellular location is the cytoplasm. The protein operates within protein biosynthesis; polypeptide chain elongation. Its function is as follows. Involved in peptide bond synthesis. Stimulates efficient translation and peptide-bond synthesis on native or reconstituted 70S ribosomes in vitro. Probably functions indirectly by altering the affinity of the ribosome for aminoacyl-tRNA, thus increasing their reactivity as acceptors for peptidyl transferase. This Deinococcus geothermalis (strain DSM 11300 / CIP 105573 / AG-3a) protein is Elongation factor P.